We begin with the raw amino-acid sequence, 351 residues long: Protein Wnt-4 (351 aa).

Residues 1–22 form the signal peptide; it reads MTPEYFLRSLLMMILAVFSANA. Cystine bridges form between cysteine 78/cysteine 89, cysteine 128/cysteine 136, cysteine 138/cysteine 155, cysteine 206/cysteine 220, cysteine 208/cysteine 215, cysteine 280/cysteine 311, cysteine 296/cysteine 306, cysteine 310/cysteine 350, cysteine 326/cysteine 341, cysteine 328/cysteine 338, and cysteine 333/cysteine 334. Asparagine 88 carries an N-linked (GlcNAc...) asparagine glycan. The O-palmitoleoyl serine; by PORCN moiety is linked to residue serine 212. Asparagine 297 is a glycosylation site (N-linked (GlcNAc...) asparagine).

It belongs to the Wnt family. Post-translationally, palmitoleoylation is required for efficient binding to frizzled receptors. Depalmitoleoylation leads to Wnt signaling pathway inhibition. Expressed in the brain and floor plate. In the developing pronephros, expressed in the proximal tubules and nephrostomes but absent from the pronephric duct.

The protein resides in the secreted. It is found in the extracellular space. Its subcellular location is the extracellular matrix. Functionally, ligand for members of the frizzled family of seven transmembrane receptors. Plays an important role in embryonic kidney development. Acts downstream of Notch signaling during pronephric kidney development. During early pronephros development, patterns the proximal pronephric anlagen to promote glomus and nephrostome formation. Also required later in pronephros development for tubulogenesis. The polypeptide is Protein Wnt-4 (wnt4) (Xenopus laevis (African clawed frog)).